Here is a 586-residue protein sequence, read N- to C-terminus: MDDLDALLADLESTTSHISKRPVFLSEEPPYSYPTGNHTYQEIAVPPPVPPPPSSEALNGTVLDPLDQWQPSGSRYAHQQPPSPSPIYSSSTKNSSASNPQDSVGSLCSRAGEEEHVYSFPNKQKSAEPSPTVMSSSLGSNLSELDRLLLELNAVQRSPSGFSAGMVSVQASREPLGSWGTEGRAIILSPFFQDEAESSPPLPGALSPLYGVPESNNLLGGKAGPLMKEKPKRNGGRGLEDVRPSVESLLDELENSVPSPVPAITVNQGEMSSPQRVTSSQQQTRISASSATRELDELMASLSDFKFMAQGKTGSSSPPGGLSKPGSQLDSMLGSLQSDLNKLGVATVAKGVCGACKKPIAGQVVTAMGKTWHPEHFVCTHCQEEIGSRNFFERDGQPYCEKDYHSLFSPRCYYCNGPILDKVVTALDRTWHPEHFFCAQCGAFFGPEGFHEKDGKAYCRKDYFDMFAPKCGGCARAILENYISALNTLWHPECFVCRECFTPFVNGSFFEHDGQPYCEVHYHERRGSLCSGCQKPITGRCITAMAKKFHPEHFVCAFCLKQLNKGTFKEQNDKPYCQSCFLKLFC.

At Met1 the chain carries N-acetylmethionine. Residues 3–15 carry the LD motif 1 motif; it reads DLDALLADLESTT. The segment at 13–138 is disordered; that stretch reads STTSHISKRP…PSPTVMSSSL (126 aa). Position 31 is a phosphotyrosine; by PTK6 (Tyr31). The segment covering 45-54 has biased composition (pro residues); sequence VPPPVPPPPS. Phosphoserine is present on residues Ser83 and Ser85. Positions 86–98 are enriched in low complexity; that stretch reads PIYSSSTKNSSAS. Phosphotyrosine is present on Tyr88. A Phosphoserine modification is found at Ser106. Tyr118 carries the phosphotyrosine; by PTK6 modification. Residues Ser119, Ser126, and Ser130 each carry the phosphoserine modification. Positions 121 to 137 are enriched in polar residues; it reads PNKQKSAEPSPTVMSSS. Position 132 is a phosphothreonine (Thr132). Phosphoserine is present on residues Ser137, Ser140, and Ser143. An LD motif 2 motif is present at residues 144–156; that stretch reads ELDRLLLELNAVQ. Position 210 is a phosphotyrosine (Tyr210). The interval 220–241 is disordered; that stretch reads GGKAGPLMKEKPKRNGGRGLED. The short motif at 245-257 is the LD motif 3 element; sequence SVESLLDELENSV. Ser259 carries the phosphoserine modification. Residues 266 to 290 are disordered; the sequence is VNQGEMSSPQRVTSSQQQTRISASS. At Ser273 the chain carries Phosphoserine; by CDK5. Ser279, Ser287, Ser290, Ser301, Ser317, Ser327, and Ser335 each carry phosphoserine. The segment at 291 to 310 is required for binding to PARVA and ILK; it reads ATRELDELMASLSDFKFMAQ. Positions 294 to 305 match the LD motif 4 motif; it reads ELDELMASLSDF. The segment at 309–329 is disordered; the sequence is AQGKTGSSSPPGGLSKPGSQL. Low complexity predominate over residues 310–329; that stretch reads QGKTGSSSPPGGLSKPGSQL. The LD motif 5 signature appears at 328–340; the sequence is QLDSMLGSLQSDL. 3 LIM zinc-binding domains span residues 353–403, 412–462, and 471–521; these read CGAC…CEKD, CYYC…CRKD, and CGGC…CEVH. Residue Ser528 is modified to Phosphoserine. The LIM zinc-binding 4 domain maps to 530–580; it reads CSGCQKPITGRCITAMAKKFHPEHFVCAFCLKQLNKGTFKEQNDKPYCQSC.

It belongs to the paxillin family. As to quaternary structure, interacts in vitro with VCL/vinculin as well as to the SH3 domain of SRC and, when tyrosine phosphorylated, to the SH2 domain of CRK. Interacts with GIT1. Interacts with NUDT16L1/SDOS. Interacts with PTK2/FAK1. Interacts with PTK2B/PYK2. Interacts with ASAP2. Interacts with unphosphorylated ITGA4. Interacts with RNF5. Interacts with PDCD10. Interacts with NEK3, the interaction is prolactin-dependent. Interacts with PTK6. Interacts with TGFB1I1. Interacts with SORBS1. Interacts with PARVB. Interacts (via LD motif 4) with PARVA/PARVIN. Interacts (via LD motif 4) with ILK. Interacts (via cytoplasmic domain) with CEACAM1; the interaction is phosphotyrosyl-dependent. Interacts with LIMA1; this complex stabilizes actin dynamics. Interacts with CD36 (via C-terminus). Interacts with TRIM15. Interacts with PAK4; PAK4 acts as a scaffold to suppport PAXI phosphorylation at Ser-301. Post-translationally, phosphorylated by MAPK1/ERK2. Phosphorylated on tyrosine residues during integrin-mediated cell adhesion, embryonic development, fibroblast transformation and following stimulation of cells by mitogens. Phosphorylation at Ser-273 by CDK5 reduces its interaction with PTK2/FAK1 in matrix-cell focal adhesions (MCFA) during oligodendrocytes (OLs) differentiation. Phosphorylation at Tyr-31 and Tyr-118 by PTK6 promote the activation of RAC1 via CRK/CrKII, thereby promoting migration and invasion. Phosphorylation at Ser-279 by SLK is required for PXN redistribution and cell motility. Phosphorylation at Ser-301 promotes focal adhesion disassembly during cell migration.

It localises to the cytoplasm. The protein resides in the cytoskeleton. Its subcellular location is the cell junction. It is found in the focal adhesion. The protein localises to the cell cortex. In terms of biological role, cytoskeletal protein involved in actin-membrane attachment at sites of cell adhesion to the extracellular matrix (focal adhesion). Recruits other proteins such as TRIM15 to focal adhesion. The protein is Paxillin of Rattus norvegicus (Rat).